Here is a 426-residue protein sequence, read N- to C-terminus: Adenylosuccinate synthetase 2 (426 aa).

Residues 12 to 18 (GDEGKGK) and 40 to 42 (GHT) contribute to the GTP site. The active-site Proton acceptor is the Asp13. The Mg(2+) site is built by Asp13 and Gly40. IMP-binding positions include 13 to 16 (DEGK), 38 to 41 (NAGH), Arg147, Asn223, Thr238, and Arg302. The Proton donor role is filled by His41. A substrate-binding site is contributed by 298 to 304 (TNTGRRR). Residues Arg304, 330-332 (KLD), and 412-414 (GVG) contribute to the GTP site.

It belongs to the adenylosuccinate synthetase family. In terms of assembly, homodimer. Mg(2+) is required as a cofactor.

Its subcellular location is the cytoplasm. The enzyme catalyses IMP + L-aspartate + GTP = N(6)-(1,2-dicarboxyethyl)-AMP + GDP + phosphate + 2 H(+). It participates in purine metabolism; AMP biosynthesis via de novo pathway; AMP from IMP: step 1/2. Plays an important role in the de novo pathway and in the salvage pathway of purine nucleotide biosynthesis. Catalyzes the first committed step in the biosynthesis of AMP from IMP. This Laccaria bicolor (strain S238N-H82 / ATCC MYA-4686) (Bicoloured deceiver) protein is Adenylosuccinate synthetase 2.